The chain runs to 63 residues: Large ribosomal subunit protein uL29 (63 aa).

This sequence belongs to the universal ribosomal protein uL29 family.

The sequence is that of Large ribosomal subunit protein uL29 from Actinobacillus succinogenes (strain ATCC 55618 / DSM 22257 / CCUG 43843 / 130Z).